A 486-amino-acid polypeptide reads, in one-letter code: D-mannonate oxidoreductase (486 aa).

25-36 (IVHLGCGAFHRA) lines the NAD(+) pocket.

The protein belongs to the mannitol dehydrogenase family. UxuB subfamily.

It carries out the reaction D-mannonate + NAD(+) = keto-D-fructuronate + NADH + H(+). The protein operates within carbohydrate metabolism; pentose and glucuronate interconversion. The polypeptide is D-mannonate oxidoreductase (uxuB) (Escherichia coli (strain K12)).